Here is a 263-residue protein sequence, read N- to C-terminus: Phosphatidylglycerol--prolipoprotein diacylglyceryl transferase (263 aa).

Helical transmembrane passes span 10–30 (VAITLGPLQFRWYGLMYLFGF), 56–76 (MVTYVILGVVLGGRIGYILFY), 91–111 (IWNGGMSFHGGLLGVVFAMWL), and 117–137 (GLGFMDVSDFVAPLIPPGLFF). Residue Arg139 participates in a 1,2-diacyl-sn-glycero-3-phospho-(1'-sn-glycerol) binding. Helical transmembrane passes span 171–191 (PSQLYECALEGVILFLALWVF), 199–219 (GHVSGLFALLYGVFRFTVEFV), and 231–251 (FGWLTMGQVLCLPLIMLGLWL).

Belongs to the Lgt family.

The protein localises to the cell inner membrane. It catalyses the reaction L-cysteinyl-[prolipoprotein] + a 1,2-diacyl-sn-glycero-3-phospho-(1'-sn-glycerol) = an S-1,2-diacyl-sn-glyceryl-L-cysteinyl-[prolipoprotein] + sn-glycerol 1-phosphate + H(+). The protein operates within protein modification; lipoprotein biosynthesis (diacylglyceryl transfer). In terms of biological role, catalyzes the transfer of the diacylglyceryl group from phosphatidylglycerol to the sulfhydryl group of the N-terminal cysteine of a prolipoprotein, the first step in the formation of mature lipoproteins. This Nitratidesulfovibrio vulgaris (strain ATCC 29579 / DSM 644 / CCUG 34227 / NCIMB 8303 / VKM B-1760 / Hildenborough) (Desulfovibrio vulgaris) protein is Phosphatidylglycerol--prolipoprotein diacylglyceryl transferase.